The chain runs to 425 residues: Serine--tRNA ligase (425 aa).

Position 230 to 232 (230 to 232 (TAE)) interacts with L-serine. 261-263 (RSE) is an ATP binding site. Glu-284 is a binding site for L-serine. Residue 348–351 (EISS) participates in ATP binding. Ser-384 lines the L-serine pocket.

It belongs to the class-II aminoacyl-tRNA synthetase family. Type-1 seryl-tRNA synthetase subfamily. In terms of assembly, homodimer. The tRNA molecule binds across the dimer.

It localises to the cytoplasm. The catalysed reaction is tRNA(Ser) + L-serine + ATP = L-seryl-tRNA(Ser) + AMP + diphosphate + H(+). It catalyses the reaction tRNA(Sec) + L-serine + ATP = L-seryl-tRNA(Sec) + AMP + diphosphate + H(+). It participates in aminoacyl-tRNA biosynthesis; selenocysteinyl-tRNA(Sec) biosynthesis; L-seryl-tRNA(Sec) from L-serine and tRNA(Sec): step 1/1. In terms of biological role, catalyzes the attachment of serine to tRNA(Ser). Is also able to aminoacylate tRNA(Sec) with serine, to form the misacylated tRNA L-seryl-tRNA(Sec), which will be further converted into selenocysteinyl-tRNA(Sec). This chain is Serine--tRNA ligase, found in Streptococcus thermophilus (strain ATCC BAA-491 / LMD-9).